The sequence spans 34 residues: Photosystem II reaction center protein M (34 aa).

Residues 5–25 form a helical membrane-spanning segment; sequence ILAFIATTLFVLVPTAFLLII.

This sequence belongs to the PsbM family. As to quaternary structure, PSII is composed of 1 copy each of membrane proteins PsbA, PsbB, PsbC, PsbD, PsbE, PsbF, PsbH, PsbI, PsbJ, PsbK, PsbL, PsbM, PsbT, PsbX, PsbY, PsbZ, Psb30/Ycf12, at least 3 peripheral proteins of the oxygen-evolving complex and a large number of cofactors. It forms dimeric complexes.

Its subcellular location is the plastid. The protein localises to the chloroplast thylakoid membrane. Its function is as follows. One of the components of the core complex of photosystem II (PSII). PSII is a light-driven water:plastoquinone oxidoreductase that uses light energy to abstract electrons from H(2)O, generating O(2) and a proton gradient subsequently used for ATP formation. It consists of a core antenna complex that captures photons, and an electron transfer chain that converts photonic excitation into a charge separation. This subunit is found at the monomer-monomer interface. The sequence is that of Photosystem II reaction center protein M from Citrus sinensis (Sweet orange).